The primary structure comprises 662 residues: Neurexin-2-beta (662 aa).

A compositionally biased stretch (gly residues) spans 1–10 (MPPGGSGQGG). Positions 1–27 (MPPGGSGQGGCPRRPPALAGPLPPPPP) are disordered. An N-terminal signal peptide occupies residues 1–46 (MPPGGSGQGGCPRRPPALAGPLPPPPPPPPLPLLLGLLLLLGAAEG). Topologically, residues 47–586 (ARVSSSLSTT…EVIRESSSTT (540 aa)) are extracellular. Residues 87–295 (TTYIFGKGGA…HLRLVGEGPS (209 aa)) form the Laminin G-like domain. Ca(2+)-binding residues include Asp139 and Val156. Asn186 carries N-linked (GlcNAc...) asparagine glycosylation. Residues Ile238 and Asn240 each contribute to the Ca(2+) site. Ser350 carries an O-linked (Xyl...) (heparan sulfate) serine glycan. Disordered regions lie at residues 408–458 (ATQD…LPPT), 476–496 (LLSPRKPAPRPNLRTDGATGA), and 530–557 (LGPGVPTAFEPRRPPPLRPGVTSVPGFP). A helical transmembrane segment spans residues 587–607 (GMVVGIVAAAALCILILLYAM). Residues 608-662 (YKYRNRDEGSYQVDQSRNYISNSAQSNGAVVKEKAPAAPKTPSKAKKNKDKEYYV) are Cytoplasmic-facing. Residues 629 to 662 (NSAQSNGAVVKEKAPAAPKTPSKAKKNKDKEYYV) are disordered.

It belongs to the neurexin family. In terms of assembly, interacts (via cytoplasmic C-terminal region) with CASK. Isoform Beta 4b binds alpha-dystroglycan and neuroligins NLGN1, NLGN2 and NLGN3. Interacts with CBLN1, CBLN2 and, less avidly, with CBLN4. Interacts with CLSTN3. In terms of processing, O-glycosylated; contains heparan sulfate. Heparan sulfate attachment is required for synapse development by mediating interactions with neuroligins. As to expression, brain (neuronal synapse).

The protein localises to the presynaptic cell membrane. Neuronal cell surface protein that may be involved in cell recognition and cell adhesion. The protein is Neurexin-2-beta (Nrxn2) of Rattus norvegicus (Rat).